The following is a 633-amino-acid chain: Chaperone protein HtpG (633 aa).

Residues 1-344 (MSLQPQAETL…SNDLPLNISR (344 aa)) are a; substrate-binding. Residues 345 to 560 (ELLQSNEVIN…ENEMSGHLQR (216 aa)) form a b region. Residues 561 to 633 (LLIQTGQDFM…KGLNELLLDS (73 aa)) are c.

Belongs to the heat shock protein 90 family. As to quaternary structure, homodimer.

It is found in the cytoplasm. Molecular chaperone. Has ATPase activity. The protein is Chaperone protein HtpG of Coxiella burnetii (strain RSA 493 / Nine Mile phase I).